We begin with the raw amino-acid sequence, 86 residues long: Photosystem I reaction center subunit PsaK (86 aa).

Residues 15-34 (PWSTQVAMVMITCNLLAIVA) form a helical membrane-spanning segment.

This sequence belongs to the PsaG/PsaK family.

Its subcellular location is the plastid. The protein resides in the chloroplast thylakoid membrane. This Pyropia yezoensis (Susabi-nori) protein is Photosystem I reaction center subunit PsaK.